The primary structure comprises 118 residues: UPF0342 protein BT9727_0768 (118 aa).

Belongs to the UPF0342 family.

In Bacillus thuringiensis subsp. konkukian (strain 97-27), this protein is UPF0342 protein BT9727_0768.